A 468-amino-acid polypeptide reads, in one-letter code: 3-isopropylmalate dehydratase large subunit (468 aa).

[4Fe-4S] cluster-binding residues include Cys-347, Cys-407, and Cys-410.

This sequence belongs to the aconitase/IPM isomerase family. LeuC type 1 subfamily. In terms of assembly, heterodimer of LeuC and LeuD. It depends on [4Fe-4S] cluster as a cofactor.

It catalyses the reaction (2R,3S)-3-isopropylmalate = (2S)-2-isopropylmalate. Its pathway is amino-acid biosynthesis; L-leucine biosynthesis; L-leucine from 3-methyl-2-oxobutanoate: step 2/4. Its function is as follows. Catalyzes the isomerization between 2-isopropylmalate and 3-isopropylmalate, via the formation of 2-isopropylmaleate. This Synechococcus sp. (strain CC9311) protein is 3-isopropylmalate dehydratase large subunit.